The following is a 511-amino-acid chain: Inositol-3-phosphate synthase isozyme 1 (511 aa).

The NAD(+) site is built by G71, G72, N73, N74, D144, I181, Q191, R194, T231, A232, N233, T234, G282, S283, D307, S310, N341, N342, D343, K356, A394, D395, D423, and S424.

Belongs to the myo-inositol 1-phosphate synthase family. In terms of assembly, homotrimer or homotetramer. Interacts with ATXR5 and ATXR6. NAD(+) is required as a cofactor. As to expression, expressed in siliques, leaves, roots, seed endosperm, but not in embryos. Highest expression in leaves, but restricted to vascular tissue in older leaves.

The protein localises to the cytoplasm. It is found in the cytosol. The protein resides in the nucleus. It catalyses the reaction D-glucose 6-phosphate = 1D-myo-inositol 3-phosphate. The protein operates within polyol metabolism; myo-inositol biosynthesis; myo-inositol from D-glucose 6-phosphate: step 1/2. Functionally, key enzyme in myo-inositol biosynthesis pathway that catalyzes the conversion of glucose 6-phosphate to 1-myo-inositol 1-phosphate in a NAD-dependent manner. Catalyzes the majority of myo-inositol synthesis required for plant growth and development. Acts as a repressor of programmed cell death and protects plant cells against cell death under high light intensity or long days. Controls its own transcription by inhibiting ATXR6 activity. Reduces the deposition of inhibitory histone marks on its own promoter. This chain is Inositol-3-phosphate synthase isozyme 1 (IPS1), found in Arabidopsis thaliana (Mouse-ear cress).